The primary structure comprises 280 residues: Acetyl-coenzyme A carboxylase carboxyl transferase subunit beta (280 aa).

One can recognise a CoA carboxyltransferase N-terminal domain in the interval 25-280 (VMRECPICHA…RLHTKENAYG (256 aa)). 4 residues coordinate Zn(2+): Cys29, Cys32, Cys47, and Cys50. Residues 29–50 (CPICHAKFLSMRLGRDHTCPKC) form a C4-type zinc finger.

Belongs to the AccD/PCCB family. Acetyl-CoA carboxylase is a heterohexamer composed of biotin carboxyl carrier protein (AccB), biotin carboxylase (AccC) and two subunits each of ACCase subunit alpha (AccA) and ACCase subunit beta (AccD). It depends on Zn(2+) as a cofactor.

The protein localises to the cytoplasm. It carries out the reaction N(6)-carboxybiotinyl-L-lysyl-[protein] + acetyl-CoA = N(6)-biotinyl-L-lysyl-[protein] + malonyl-CoA. Its pathway is lipid metabolism; malonyl-CoA biosynthesis; malonyl-CoA from acetyl-CoA: step 1/1. In terms of biological role, component of the acetyl coenzyme A carboxylase (ACC) complex. Biotin carboxylase (BC) catalyzes the carboxylation of biotin on its carrier protein (BCCP) and then the CO(2) group is transferred by the transcarboxylase to acetyl-CoA to form malonyl-CoA. The polypeptide is Acetyl-coenzyme A carboxylase carboxyl transferase subunit beta (Lactobacillus helveticus (strain DPC 4571)).